Consider the following 337-residue polypeptide: Glyceraldehyde-3-phosphate dehydrogenase (337 aa).

NAD(+) contacts are provided by residues 12–13 (RI), Asp-34, and Arg-79. D-glyceraldehyde 3-phosphate-binding positions include 150–152 (SCT), Thr-181, 210–211 (TG), and Arg-233. Cys-151 (nucleophile) is an active-site residue. NAD(+) is bound at residue Asn-315.

It belongs to the glyceraldehyde-3-phosphate dehydrogenase family. Homotetramer.

Its subcellular location is the cytoplasm. The catalysed reaction is D-glyceraldehyde 3-phosphate + phosphate + NAD(+) = (2R)-3-phospho-glyceroyl phosphate + NADH + H(+). It participates in carbohydrate degradation; glycolysis; pyruvate from D-glyceraldehyde 3-phosphate: step 1/5. This chain is Glyceraldehyde-3-phosphate dehydrogenase, found in Cryphonectria parasitica (Chestnut blight fungus).